A 194-amino-acid chain; its full sequence is Methylated-DNA--protein-cysteine methyltransferase (194 aa).

The DNA site is built by Tyr-125 and Arg-139. Cys-156 serves as the catalytic Nucleophile; methyl group acceptor. DNA is bound at residue Ser-162.

It belongs to the MGMT family.

It localises to the nucleus. It carries out the reaction a 6-O-methyl-2'-deoxyguanosine in DNA + L-cysteinyl-[protein] = S-methyl-L-cysteinyl-[protein] + a 2'-deoxyguanosine in DNA. The enzyme catalyses a 4-O-methyl-thymidine in DNA + L-cysteinyl-[protein] = a thymidine in DNA + S-methyl-L-cysteinyl-[protein]. Involved in the cellular defense against the biological effects of O6-methylguanine (O6-MeG) and O4-methylthymine (O4-MeT) in DNA. Repairs the methylated nucleobase in DNA by stoichiometrically transferring the methyl group to a cysteine residue in the enzyme. This is a suicide reaction: the enzyme is irreversibly inactivated. This chain is Methylated-DNA--protein-cysteine methyltransferase (MGT1), found in Scheffersomyces stipitis (strain ATCC 58785 / CBS 6054 / NBRC 10063 / NRRL Y-11545) (Yeast).